Reading from the N-terminus, the 71-residue chain is Small ribosomal subunit protein eS17 (71 aa).

This sequence belongs to the eukaryotic ribosomal protein eS17 family.

The polypeptide is Small ribosomal subunit protein eS17 (Pyrobaculum neutrophilum (strain DSM 2338 / JCM 9278 / NBRC 100436 / V24Sta) (Thermoproteus neutrophilus)).